The primary structure comprises 495 residues: Amorpha-4,11-diene 12-monooxygenase (495 aa).

Over Met1–Lys6 the chain is Cytoplasmic. Residues Ala7–Ala29 form a helical; Signal-anchor for type II membrane protein membrane-spanning segment. Over Thr30–Phe495 the chain is Lumenal. Residues Asn176, Asn261, Asn267, Asn386, and Asn417 are each glycosylated (N-linked (GlcNAc...) asparagine). Residue Cys439 coordinates heme.

It belongs to the cytochrome P450 family. It depends on heme as a cofactor. As to expression, highly expressed both in apical and sub-apical cells of glandular secretory trichomes. Detected in flower buds, leaves and roots. Also present in non-glandular trichome cells.

The protein localises to the endoplasmic reticulum membrane. The catalysed reaction is (+)-amorpha-4,11-diene + 3 reduced [NADPH--hemoprotein reductase] + 3 O2 = (+)-artemisinate + 3 oxidized [NADPH--hemoprotein reductase] + 4 H2O + 4 H(+). It functions in the pathway sesquiterpene biosynthesis. In terms of biological role, involved in the biosynthesis of the antimalarial endoperoxide artemisinin. Catalyzes three consecutive oxidations of amorpha-4,11-diene to produce artemisinic acid, with artemisinic alcohol and artemisinic aldehyde as intermediates products, but is unable to oxidize germacrene A. No activity with limonene, alpha-pinene, beta-pinene, pinocarveol, (-)-alloisolongifolene, caryophyllene, (-)-alpha-gurjunene, (+)-gamma-gurjunene, (+)-ledene, (+)-beta-selinene and (+)-valencene as substrates. This Artemisia annua (Sweet wormwood) protein is Amorpha-4,11-diene 12-monooxygenase.